The chain runs to 431 residues: Glutamate--tRNA ligase 1 (431 aa).

The short motif at 6–16 is the 'HIGH' region element; that stretch reads PSPTGDMHIGN. The 'KMSKS' region motif lies at 235–239; sequence KMSKR. Lysine 238 is a binding site for ATP.

The protein belongs to the class-I aminoacyl-tRNA synthetase family. Glutamate--tRNA ligase type 1 subfamily. Monomer.

Its subcellular location is the cytoplasm. The catalysed reaction is tRNA(Glu) + L-glutamate + ATP = L-glutamyl-tRNA(Glu) + AMP + diphosphate. Its function is as follows. Catalyzes the attachment of glutamate to tRNA(Glu) in a two-step reaction: glutamate is first activated by ATP to form Glu-AMP and then transferred to the acceptor end of tRNA(Glu). This Campylobacter concisus (strain 13826) protein is Glutamate--tRNA ligase 1.